A 374-amino-acid polypeptide reads, in one-letter code: uncharacterized protein (374 aa).

29–36 serves as a coordination point for ATP; the sequence is GSLNSGKS.

It belongs to the archaeal ATPase family.

This is an uncharacterized protein from Methanocaldococcus jannaschii (strain ATCC 43067 / DSM 2661 / JAL-1 / JCM 10045 / NBRC 100440) (Methanococcus jannaschii).